We begin with the raw amino-acid sequence, 477 residues long: Glutamate--tRNA ligase (477 aa).

A 'HIGH' region motif is present at residues 12–22; the sequence is PSPTGMFHVGG. Zn(2+)-binding residues include C106, C108, C128, and D130. The 'KMSKS' region signature appears at 238 to 242; it reads KLSKR. Residue K241 coordinates ATP.

Belongs to the class-I aminoacyl-tRNA synthetase family. Glutamate--tRNA ligase type 1 subfamily. Monomer. Requires Zn(2+) as cofactor.

The protein resides in the cytoplasm. It catalyses the reaction tRNA(Glu) + L-glutamate + ATP = L-glutamyl-tRNA(Glu) + AMP + diphosphate. In terms of biological role, catalyzes the attachment of glutamate to tRNA(Glu) in a two-step reaction: glutamate is first activated by ATP to form Glu-AMP and then transferred to the acceptor end of tRNA(Glu). This Thermobifida fusca (strain YX) protein is Glutamate--tRNA ligase.